Consider the following 208-residue polypeptide: Large ribosomal subunit protein bL17 (208 aa).

The interval 122–208 (TEKKKKKPAK…ASEEAPPKTE (87 aa)) is disordered. Low complexity predominate over residues 151–179 (ADTPAPAAEESAPAKAAEPEAEAAAPEAE).

This sequence belongs to the bacterial ribosomal protein bL17 family. In terms of assembly, part of the 50S ribosomal subunit. Contacts protein L32.

This is Large ribosomal subunit protein bL17 from Desulfosudis oleivorans (strain DSM 6200 / JCM 39069 / Hxd3) (Desulfococcus oleovorans).